We begin with the raw amino-acid sequence, 447 residues long: Blue-light photoreceptor PHR2 (447 aa).

Over residues 1 to 14 the composition is skewed to polar residues; it reads MDSSNVEENLNPET. The interval 1-20 is disordered; sequence MDSSNVEENLNPETKSAEEQ. Positions 115 to 249 constitute a Photolyase/cryptochrome alpha/beta domain; the sequence is RAAVVWFRND…EVKYFWGSTL (135 aa).

Belongs to the DNA photolyase class-1 family. FAD is required as a cofactor.

This is Blue-light photoreceptor PHR2 (PHR2) from Arabidopsis thaliana (Mouse-ear cress).